The primary structure comprises 119 residues: Ribonuclease P protein component (119 aa).

This sequence belongs to the RnpA family. As to quaternary structure, consists of a catalytic RNA component (M1 or rnpB) and a protein subunit.

It carries out the reaction Endonucleolytic cleavage of RNA, removing 5'-extranucleotides from tRNA precursor.. In terms of biological role, RNaseP catalyzes the removal of the 5'-leader sequence from pre-tRNA to produce the mature 5'-terminus. It can also cleave other RNA substrates such as 4.5S RNA. The protein component plays an auxiliary but essential role in vivo by binding to the 5'-leader sequence and broadening the substrate specificity of the ribozyme. In Salmonella arizonae (strain ATCC BAA-731 / CDC346-86 / RSK2980), this protein is Ribonuclease P protein component.